The sequence spans 463 residues: A-type ATP synthase subunit B (463 aa).

The protein belongs to the ATPase alpha/beta chains family. As to quaternary structure, has multiple subunits with at least A(3), B(3), C, D, E, F, H, I and proteolipid K(x).

Its subcellular location is the cell membrane. Its function is as follows. Component of the A-type ATP synthase that produces ATP from ADP in the presence of a proton gradient across the membrane. The B chain is a regulatory subunit. The chain is A-type ATP synthase subunit B from Saccharolobus islandicus (strain Y.N.15.51 / Yellowstone #2) (Sulfolobus islandicus).